A 113-amino-acid polypeptide reads, in one-letter code: MHELWLCKRIVEIIKQQATGNKCRKVKKIVLEIGQLVAVDKHALNFSFKVITQGTIAQNAELSIVEIPGEAICNSCQQIVPMKQYYDECLVCGNHSLTLTKGEELKVKSMVVE.

H2 is a binding site for Ni(2+). Residues C73, C76, C89, and C92 each contribute to the Zn(2+) site.

Belongs to the HypA/HybF family.

Involved in the maturation of [NiFe] hydrogenases. Required for nickel insertion into the metal center of the hydrogenase. This Legionella pneumophila subsp. pneumophila (strain Philadelphia 1 / ATCC 33152 / DSM 7513) protein is Hydrogenase maturation factor HypA.